A 672-amino-acid chain; its full sequence is Iron-phytosiderophore transporter YSL15 (672 aa).

Basic and acidic residues predominate over residues 1–11 (MEHADADRTRV). Residues 1-27 (MEHADADRTRVAPEIGSLHDEDAEADP) are disordered. Helical transmembrane passes span 47–67 (GVVA…KIAL), 70–90 (GLVP…LRGW), 115–135 (CAVA…LLGL), 158–178 (GIGW…LSLI), 218–238 (LHGF…QWFY), 279–299 (LVNL…WPLI), 325–345 (FLCI…VTGV), 390–410 (MAYS…PIMF), 418–438 (VIIA…GAGL), 450–470 (IALF…AGLV), 504–524 (VGEL…FMLF), 556–576 (ISAL…FAVL), 602–622 (FLVG…LFAW), and 630–650 (AAFM…IWTF).

The protein belongs to the YSL (TC 2.A.67.2) family. Expressed in root phloem and at low levels in the shoot companion cells.

The protein localises to the cell membrane. Functionally, involved in Fe(3+) uptake from the rhizosphere and phloem transport of iron. Plays an important role in iron homeostasis during the early stages of growth. Transports Fe(3+)-phytosiderophore, but not Fe(3+)- or Fe(2+)-nicotianamine. May not transport other chelated metals. This is Iron-phytosiderophore transporter YSL15 (YSL15) from Oryza sativa subsp. japonica (Rice).